Consider the following 289-residue polypeptide: Transcription factor MafA (289 aa).

The segment covering 52–73 (STPISTPCSSVPSSPSFCAPSP) has biased composition (low complexity). Disordered stretches follow at residues 52–87 (STPISTPCSSVPSSPSFCAPSPGAQSGVNPSNPNAA) and 126–164 (HHHHHHHQGYDGFRGQQYPGDEMAPSGHHHQVHHHHHHH). A compositionally biased stretch (polar residues) spans 74–87 (GAQSGVNPSNPNAA). Over residues 152–164 (GHHHQVHHHHHHH) the composition is skewed to basic residues. The interval 201–226 (RLKQKRRTLKNRGYAQSCRYKRVQQR) is basic motif. A bZIP domain is found at 201-264 (RLKQKRRTLK…DLYKDKYEKL (64 aa)). The tract at residues 229-250 (LETEKCQLQSQVEQLKQEVSRL) is leucine-zipper. A disordered region spans residues 266–289 (SRSFTTRESPPQGNPGKANADFFM). Polar residues predominate over residues 267-276 (RSFTTRESPP).

The protein belongs to the bZIP family. Maf subfamily.

Its subcellular location is the nucleus. Functionally, transcription factor, possibly involved in transcription regulation during lens development. This chain is Transcription factor MafA (mafa), found in Xenopus tropicalis (Western clawed frog).